We begin with the raw amino-acid sequence, 469 residues long: MFKRYQHIHFVGIGGIGMSGIAELLLNLGYRVSGSDLKETEITRRLSAMGAAVHLGHRAEHVLGADVVVLSSAISDDNPENRAAREMGKVPVIRRAEMLAELMRLKYSVLVAGAHGKTTTTSMVSTVLARGGLDPTVVIGGKLNAWGTNAKLGNGDFMVAEADESDGTFLLLPPTIAVVTNIDLEHLDFYRDLAHIQETFLQFINKIPFYGQAVLCLEDENIQSILPRVEKRFTTYGFSSQADFQARDVRTSGLFSSYRVHSHGDELGEIEIRIPGRHNVLNSLAAVAVARELDLDWANIQDGLRDMTGVQRRFQIKGEAANVLVIDDYGHHPSEIRAVLQTLADCYPDRRRIVVFQPHRYTRTRALMEQFARCFYHSDVLLVTEIYAASETPIPGVTGERLSQEIASHGHHDLHFCETVESALSRLVKLVKPGDAVITLGAGNIWQVGEWLLAKLKSSGGSGGTGELK.

Residue 113 to 119 coordinates ATP; that stretch reads GAHGKTT.

The protein belongs to the MurCDEF family.

It localises to the cytoplasm. The enzyme catalyses UDP-N-acetyl-alpha-D-muramate + L-alanine + ATP = UDP-N-acetyl-alpha-D-muramoyl-L-alanine + ADP + phosphate + H(+). It functions in the pathway cell wall biogenesis; peptidoglycan biosynthesis. Cell wall formation. In Syntrophobacter fumaroxidans (strain DSM 10017 / MPOB), this protein is UDP-N-acetylmuramate--L-alanine ligase.